The following is a 226-amino-acid chain: Thioredoxin domain-containing protein 9 (226 aa).

The region spanning 75 to 180 is the Thioredoxin domain; the sequence is EIGSERDFFQ…TTETLEWRLG (106 aa). Residues Ser188, Ser221, and Ser223 each carry the phosphoserine modification.

Forms ternary complexes with the chaperonin TCP1 complex, spanning the cylindrical chaperonin cavity and contacting at least 2 subunits. In terms of tissue distribution, expressed in testis, liver, heart, kidney, brain, spleen and lung.

It localises to the cytoplasm. The protein localises to the nucleus. Its subcellular location is the cytoskeleton. It is found in the microtubule organizing center. The protein resides in the centrosome. It localises to the midbody. Significantly diminishes the chaperonin TCP1 complex ATPase activity, thus negatively impacts protein folding, including that of actin or tubulin. The sequence is that of Thioredoxin domain-containing protein 9 (Txndc9) from Mus musculus (Mouse).